Here is a 1134-residue protein sequence, read N- to C-terminus: Phytochrome 1 (1134 aa).

Residues 219 to 401 (DIGLLCDTVV…VFGLQLNMEA (183 aa)) enclose the GAF domain. Position 324 (cysteine 324) interacts with phytochromobilin. The PAS 1 domain occupies 616–687 (VANEMVRLIE…RLLYLALQGD (72 aa)). The region spanning 690–746 (QNVELKLKTFGGQKDKEAVILVVNACASRDVSDNVVGVCFVGQDVTGQKVVMDKFTR) is the PAC domain. The PAS 2 domain occupies 750 to 821 (DYKAIVQNPN…KGQDAVTKFM (72 aa)). In terms of domain architecture, Histidine kinase spans 901-1121 (YIRQEIKNPL…LVSLELPLAQ (221 aa)).

Belongs to the phytochrome family. As to quaternary structure, homodimer. In terms of processing, contains one covalently linked phytochromobilin chromophore.

In terms of biological role, regulatory photoreceptor which exists in two forms that are reversibly interconvertible by light: the Pr form that absorbs maximally in the red region of the spectrum and the Pfr form that absorbs maximally in the far-red region. Photoconversion of Pr to Pfr induces an array of morphogenic responses, whereas reconversion of Pfr to Pr cancels the induction of those responses. Pfr controls the expression of a number of nuclear genes including those encoding the small subunit of ribulose-bisphosphate carboxylase, chlorophyll A/B binding protein, protochlorophyllide reductase, rRNA, etc. It also controls the expression of its own gene(s) in a negative feedback fashion. The sequence is that of Phytochrome 1 (PHY1) from Selaginella martensii (Martens's spike moss).